Consider the following 357-residue polypeptide: sn-glycerol-3-phosphate import ATP-binding protein UgpC (357 aa).

One can recognise an ABC transporter domain in the interval 4-235 (LKLQAVTKSY…PASLFVASFI (232 aa)). Residue 37–44 (GPSGCGKS) participates in ATP binding.

Belongs to the ABC transporter superfamily. sn-glycerol-3-phosphate importer (TC 3.A.1.1.3) family. The complex is composed of two ATP-binding proteins (UgpC), two transmembrane proteins (UgpA and UgpE) and a solute-binding protein (UgpB).

The protein resides in the cell inner membrane. The enzyme catalyses sn-glycerol 3-phosphate(out) + ATP + H2O = sn-glycerol 3-phosphate(in) + ADP + phosphate + H(+). Functionally, part of the ABC transporter complex UgpBAEC involved in sn-glycerol-3-phosphate (G3P) import. Responsible for energy coupling to the transport system. This Yersinia pestis bv. Antiqua (strain Antiqua) protein is sn-glycerol-3-phosphate import ATP-binding protein UgpC.